A 303-amino-acid polypeptide reads, in one-letter code: Sulfate adenylyltransferase subunit 2 (303 aa).

The disordered stretch occupies residues 282–303 (SGRLIDHDESGSMEKKKREGYF).

Belongs to the PAPS reductase family. CysD subfamily. Heterodimer composed of CysD, the smaller subunit, and CysN.

It catalyses the reaction sulfate + ATP + H(+) = adenosine 5'-phosphosulfate + diphosphate. It functions in the pathway sulfur metabolism; hydrogen sulfide biosynthesis; sulfite from sulfate: step 1/3. Functionally, with CysN forms the ATP sulfurylase (ATPS) that catalyzes the adenylation of sulfate producing adenosine 5'-phosphosulfate (APS) and diphosphate, the first enzymatic step in sulfur assimilation pathway. APS synthesis involves the formation of a high-energy phosphoric-sulfuric acid anhydride bond driven by GTP hydrolysis by CysN coupled to ATP hydrolysis by CysD. This Maricaulis maris (strain MCS10) (Caulobacter maris) protein is Sulfate adenylyltransferase subunit 2.